The sequence spans 343 residues: Ribosomal RNA small subunit methyltransferase C (343 aa).

This sequence belongs to the methyltransferase superfamily. RsmC family. In terms of assembly, monomer.

The protein resides in the cytoplasm. The catalysed reaction is guanosine(1207) in 16S rRNA + S-adenosyl-L-methionine = N(2)-methylguanosine(1207) in 16S rRNA + S-adenosyl-L-homocysteine + H(+). Functionally, specifically methylates the guanine in position 1207 of 16S rRNA in the 30S particle. This Escherichia coli (strain ATCC 8739 / DSM 1576 / NBRC 3972 / NCIMB 8545 / WDCM 00012 / Crooks) protein is Ribosomal RNA small subunit methyltransferase C.